The primary structure comprises 245 residues: Fibroblast growth factor 3 (245 aa).

The N-terminal stretch at 1–17 (MGLIWLLLLSLLEPSWP) is a signal peptide. N-linked (GlcNAc...) asparagine glycosylation is present at Asn65. 2 disordered regions span residues 137–181 (GSSG…FLPR) and 195–245 (QSSQ…LAVA). A compositionally biased stretch (basic residues) spans 161–173 (GRPRRGFKTRRTQ). Over residues 226-238 (TLSTRATPSTQLH) the composition is skewed to polar residues.

This sequence belongs to the heparin-binding growth factors family. Interacts with FGFR1 and FGFR2. Affinity between fibroblast growth factors (FGFs) and their receptors is increased by heparan sulfate glycosaminoglycans that function as coreceptors. In terms of processing, glycosylated.

The protein resides in the nucleus. It localises to the endoplasmic reticulum. The protein localises to the golgi apparatus. Its function is as follows. Plays an important role in the regulation of embryonic development, cell proliferation, and cell differentiation. Required for normal ear development. This is Fibroblast growth factor 3 (Fgf3) from Mus musculus (Mouse).